The following is a 424-amino-acid chain: Enolase (424 aa).

Residue Q162 coordinates (2R)-2-phosphoglycerate. The active-site Proton donor is the E204. Mg(2+) is bound by residues D241, E284, and D311. The (2R)-2-phosphoglycerate site is built by K336, R365, S366, and K387. K336 serves as the catalytic Proton acceptor.

The protein belongs to the enolase family. Mg(2+) is required as a cofactor.

Its subcellular location is the cytoplasm. It localises to the secreted. It is found in the cell surface. It carries out the reaction (2R)-2-phosphoglycerate = phosphoenolpyruvate + H2O. The protein operates within carbohydrate degradation; glycolysis; pyruvate from D-glyceraldehyde 3-phosphate: step 4/5. Catalyzes the reversible conversion of 2-phosphoglycerate (2-PG) into phosphoenolpyruvate (PEP). It is essential for the degradation of carbohydrates via glycolysis. The chain is Enolase from Sinorhizobium medicae (strain WSM419) (Ensifer medicae).